A 153-amino-acid polypeptide reads, in one-letter code: SKP1-like protein 5 (153 aa).

The tract at residues 90 to 153 is interaction with the F-box domain of F-box proteins; the sequence is MMAANYLNIQ…IREENQWAFQ (64 aa).

Belongs to the SKP1 family. In terms of assembly, part of a SCF (SKP1-cullin-F-box) protein ligase complex. Interacts with PP2A13. As to expression, restricted to inflorescences, especially in the inflorescence meristem (IM).

It is found in the nucleus. Its pathway is protein modification; protein ubiquitination. In terms of biological role, involved in ubiquitination and subsequent proteasomal degradation of target proteins. Together with CUL1, RBX1 and a F-box protein, it forms a SCF E3 ubiquitin ligase complex. The functional specificity of this complex depends on the type of F-box protein. In the SCF complex, it serves as an adapter that links the F-box protein to CUL1. The polypeptide is SKP1-like protein 5 (ASK5) (Arabidopsis thaliana (Mouse-ear cress)).